The primary structure comprises 355 residues: Peptide chain release factor 1 (355 aa).

Q233 carries the N5-methylglutamine modification.

This sequence belongs to the prokaryotic/mitochondrial release factor family. In terms of processing, methylated by PrmC. Methylation increases the termination efficiency of RF1.

It is found in the cytoplasm. Peptide chain release factor 1 directs the termination of translation in response to the peptide chain termination codons UAG and UAA. The chain is Peptide chain release factor 1 from Rickettsia typhi (strain ATCC VR-144 / Wilmington).